The sequence spans 1031 residues: LRR receptor-like serine/threonine-protein kinase EFR (1031 aa).

The N-terminal stretch at 1–24 (MKLSFSLVFNALTLLLQVCIFAQA) is a signal peptide. The Extracellular portion of the chain corresponds to 25–653 (RFSNETDMQA…LSVRKKVVSG (629 aa)). N-linked (GlcNAc...) asparagine glycans are attached at residues asparagine 28, asparagine 55, and asparagine 95. LRR repeat units lie at residues 98–120 (FLRL…VGRL), 122–144 (RLQY…LSNC), 146–168 (RLST…LGSL), 170–193 (KLAI…GNLT), 194–216 (SLQK…VARL), 218–240 (QMVF…LYNI), 242–264 (SLES…FGYL), 267–289 (NLRR…LANI), 291–312 (SLER…SFGK), and 315–335 (NLWW…SGLE). N-linked (GlcNAc...) asparagine glycosylation is found at asparagine 127 and asparagine 143. 2 N-linked (GlcNAc...) asparagine glycosylation sites follow: asparagine 180 and asparagine 191. Asparagine 239 carries an N-linked (GlcNAc...) asparagine glycan. Residue asparagine 288 is glycosylated (N-linked (GlcNAc...) asparagine). Residues asparagine 323, asparagine 329, asparagine 342, and asparagine 366 are each glycosylated (N-linked (GlcNAc...) asparagine). LRR repeat units lie at residues 345 to 368 (QLEY…ANLS), 370 to 392 (TLTS…IGNL), 394 to 416 (SLQE…FGKL), 418 to 440 (NLQV…FGNM), 442 to 464 (RLQK…LGRC), 466 to 487 (YLLD…EILQ), 490 to 512 (SLAY…VGKL), 514 to 536 (LLVG…IGGC), 538 to 560 (SMEF…SRLV), 561 to 584 (SLKN…ASLP), and 585 to 597 (SLRN…NKFE). Asparagine 439 carries an N-linked (GlcNAc...) asparagine glycan. N-linked (GlcNAc...) asparagine glycosylation is present at asparagine 478. N-linked (GlcNAc...) asparagine glycans are attached at residues asparagine 571, asparagine 590, and asparagine 608. A helical membrane pass occupies residues 654–674 (ICIGIASLLLIIIVASLCWFM). The Cytoplasmic portion of the chain corresponds to 675-1031 (KRKKKNNASD…WMLNTDMHTM (357 aa)). Threonine 709 is modified (phosphothreonine). The Protein kinase domain maps to 712 to 1001 (FSSTNLIGSG…ELISIRSKFF (290 aa)). Residues 718-726 (IGSGNFGNV) and lysine 741 each bind ATP. Residues tyrosine 791 and tyrosine 836 each carry the phosphotyrosine modification. Aspartate 849 serves as the catalytic Proton acceptor. The residue at position 897 (tyrosine 897) is a Phosphotyrosine. Positions 1005 to 1020 (TTITESPRDAPQSSPQ) are enriched in polar residues. A disordered region spans residues 1005 to 1031 (TTITESPRDAPQSSPQEWMLNTDMHTM).

Belongs to the protein kinase superfamily. Ser/Thr protein kinase family. In terms of assembly, binds to Pseudomonas syringae AvrPto1 and (via the kinase and cytoplasmic domains) to hopD2. Interacts with SERK3/BAK1, SERK4/BKK1, SERK1 and SERK2 in a specific ligand-induced manner. Binds to IOS1. Binds to BIK1 in the absence of pathogen elicitor; dissociates upon pathogen-associated molecular pattern (PAMP)-triggered activation. In terms of processing, autophosphorylated after elicitation with elfl18. Autophosphorylation is inhibited by the binding with avrPto1. Phosphorylation at T-836 is required for immune signaling. Post-translationally, polyubiquitinated at the kinase domain mediated by P.syringae AvrPtoB.

Its subcellular location is the cell membrane. The protein localises to the endomembrane system. It catalyses the reaction L-seryl-[protein] + ATP = O-phospho-L-seryl-[protein] + ADP + H(+). It carries out the reaction L-threonyl-[protein] + ATP = O-phospho-L-threonyl-[protein] + ADP + H(+). Functionally, constitutes the pattern-recognition receptor (PPR) that determines the specific perception of elongation factor Tu (EF-Tu), a potent elicitor of the defense response to pathogen-associated molecular patterns (PAMPs); phosphorylates BIK1 upon elicitation to regulate immune responses such as defense hormone expression (e.g. jasmonic acid (JA) and salicylic acid (SA)). Reduces transformation by Rhizobium radiobacter probably by inducing plant defense during the interaction. Binding to the effector AvrPto1 from P.syringae blocks the downstream plant immune response while interaction with hopD2 decreases the phosphorylation level of EFR upon elf18 treatment. Specific endoplasmic reticulum quality control components (ERD2B, CRT3, UGGT and STT3A) are required for the biogenesis of EFR. This chain is LRR receptor-like serine/threonine-protein kinase EFR, found in Arabidopsis thaliana (Mouse-ear cress).